Here is a 65-residue protein sequence, read N- to C-terminus: MGVKKEKGRKRFRKRKTYGNQILPLELLIEKNKREIINSAELMEEIYMKIDEKHTQCVTKYKKTR.

A DNA-binding region (H-T-H motif) is located at residues 11–31 (RFRKRKTYGNQILPLELLIEK).

It to B.natto SenN.

In terms of biological role, regulates the expression of extracellular-protein genes of Bacillus subtilis. This chain is Transcriptional regulatory protein SenS (senS), found in Bacillus subtilis (strain 168).